The sequence spans 268 residues: Putative cysteine-rich repeat secretory protein 5 (268 aa).

The signal sequence occupies residues 1 to 24; it reads MTGINTHFAVALFCFFSFSLRAMS. Gnk2-homologous domains are found at residues 27-129 and 135-248; these read SQML…NVSF and DVPS…ISAL.

It belongs to the cysteine-rich repeat secretory protein family.

The protein resides in the secreted. The chain is Putative cysteine-rich repeat secretory protein 5 (CRRSP5) from Arabidopsis thaliana (Mouse-ear cress).